A 455-amino-acid chain; its full sequence is Mitochondrial distribution and morphology protein 10 (455 aa).

Disordered regions lie at residues 216–249 (WETT…EDAV), 278–311 (IRFS…PSPA), and 377–399 (PRSS…PLGE). The span at 217–227 (ETTNGENGTNT) shows a compositional bias: low complexity. The segment covering 228 to 237 (SAPGNASNSR) has biased composition (polar residues). Residues 291–301 (AQIPPPSPFTP) show a composition bias toward pro residues.

Belongs to the MDM10 family. Component of the ER-mitochondria encounter structure (ERMES) or MDM complex, composed of MMM1, MDM10, MDM12 and MDM34. Associates with the mitochondrial outer membrane sorting assembly machinery SAM(core) complex.

It localises to the mitochondrion outer membrane. Its function is as follows. Component of the ERMES/MDM complex, which serves as a molecular tether to connect the endoplasmic reticulum and mitochondria. Components of this complex are involved in the control of mitochondrial shape and protein biogenesis and may function in phospholipid exchange. MDM10 is involved in the late assembly steps of the general translocase of the mitochondrial outer membrane (TOM complex). Functions in the TOM40-specific route of the assembly of outer membrane beta-barrel proteins, including the association of TOM40 with the receptor TOM22 and small TOM proteins. Can associate with the SAM(core) complex as well as the MDM12-MMM1 complex, both involved in late steps of the major beta-barrel assembly pathway, that is responsible for biogenesis of all outer membrane beta-barrel proteins. May act as a switch that shuttles between both complexes and channels precursor proteins into the TOM40-specific pathway. Plays a role in mitochondrial morphology and in the inheritance of mitochondria. The sequence is that of Mitochondrial distribution and morphology protein 10 from Coprinopsis cinerea (strain Okayama-7 / 130 / ATCC MYA-4618 / FGSC 9003) (Inky cap fungus).